The sequence spans 276 residues: Large ribosomal subunit protein uL2 (276 aa).

The disordered stretch occupies residues 219–276 (TVRGSVMNPNDHPHGGGEGRSPIGRPSPVTPWGKPALGYKTRKKNKASNKLIVSRRTK). A compositionally biased stretch (basic residues) spans 258-276 (KTRKKNKASNKLIVSRRTK).

This sequence belongs to the universal ribosomal protein uL2 family. As to quaternary structure, part of the 50S ribosomal subunit. Forms a bridge to the 30S subunit in the 70S ribosome.

Functionally, one of the primary rRNA binding proteins. Required for association of the 30S and 50S subunits to form the 70S ribosome, for tRNA binding and peptide bond formation. It has been suggested to have peptidyltransferase activity; this is somewhat controversial. Makes several contacts with the 16S rRNA in the 70S ribosome. This Clostridioides difficile (strain 630) (Peptoclostridium difficile) protein is Large ribosomal subunit protein uL2.